The following is a 595-amino-acid chain: DNA primase (595 aa).

Residues 38–62 (CPFHQEKTPSFTVSDSKRFFYCFGC) form a CHC2-type zinc finger. Residues 250–332 (NHSILVEGYF…EKKISFIRLP (83 aa)) enclose the Toprim domain. Mg(2+) is bound by residues Glu-256, Asp-300, and Asp-302.

It belongs to the DnaG primase family. Monomer. Interacts with DnaB. Zn(2+) serves as cofactor. Requires Mg(2+) as cofactor.

It carries out the reaction ssDNA + n NTP = ssDNA/pppN(pN)n-1 hybrid + (n-1) diphosphate.. RNA polymerase that catalyzes the synthesis of short RNA molecules used as primers for DNA polymerase during DNA replication. In Rickettsia felis (strain ATCC VR-1525 / URRWXCal2) (Rickettsia azadi), this protein is DNA primase.